The primary structure comprises 123 residues: Ribonuclease P protein component 1 (123 aa).

The interval 73 to 93 (PDNGVGTAFKPAGGETRQTTG) is disordered.

The protein belongs to the eukaryotic/archaeal RNase P protein component 1 family. Consists of a catalytic RNA component and at least 4-5 protein subunits.

It is found in the cytoplasm. It catalyses the reaction Endonucleolytic cleavage of RNA, removing 5'-extranucleotides from tRNA precursor.. In terms of biological role, part of ribonuclease P, a protein complex that generates mature tRNA molecules by cleaving their 5'-ends. This Halobacterium salinarum (strain ATCC 29341 / DSM 671 / R1) protein is Ribonuclease P protein component 1.